The sequence spans 182 residues: Functional amyloid subunit FapB (182 aa).

Residues 1-18 (MTHSWLLLTVLGCSAAMA) form the signal peptide. One copy of the FapB_R1 repeat lies at 22 to 58 (NQALIDNAGKQYTGVLSVNQAAGNQHQQINSRAISLG). Residues 80–114 (SAAIQGSAFSNGNGILGVNQSAGANNQMINAVRIS) form a FapB_R2 repeat. One copy of the FapB_R3 repeat lies at 150–180 (SDQAFTGSRGVVQVNQSAGVGNRMANTLGVT).

It belongs to the FapB/FapC family. In terms of assembly, forms fibrils in vitro; in the presence of FapA the fibrils are slightly narrower. A minor component of purified amyloid fibrils. Fibrils are resistant to boiling in 2% (weight/vol) SDS and require &gt;90% (vol/vol) formic acid to dissolve.

The protein resides in the fimbrium. It is found in the secreted. Functionally, a minor component of the functional amyloid in this bacterium. Probably nucleates fibril formation; FapB nucleates fibrillation its own, FapA inhibits FapB fibril elongation. Upon overexpression of the endogenous six-gene locus (fapA-fapF) in situ, cells form large clumps during liquid growth, make large amounts of biofilm and produce amyloid fibrils. Expression of the 6 gene operon in E.coli strain BL21(DE3) induces flocculation and biofilm formation with copious extracellular fibrils. The sequence is that of Functional amyloid subunit FapB from Pseudomonas fluorescens.